Consider the following 590-residue polypeptide: Putative histone-lysine N-methyltransferase PRDM6 (590 aa).

The tract at residues 25–87 (QLFPHGGGGP…STPASSSTSA (63 aa)) is disordered. Over residues 29–42 (HGGGGPLKGGGAAG) the composition is skewed to gly residues. A compositionally biased stretch (low complexity) spans 71 to 87 (ASLSSASSTPASSSTSA). Positions 241–360 (REVCLCTSTV…RGTELLVWYN (120 aa)) constitute an SET domain. A C2H2-type 1; degenerate zinc finger spans residues 468-490 (WKCGQCFKTFTQRILLQMHVCTQ). C2H2-type zinc fingers lie at residues 496–518 (YQCG…VVTH) and 524–546 (FKCG…IRTH). Residues 552-574 (FKCERCERSFTQATQLSRHQRMP) form a C2H2-type 4; degenerate zinc finger.

It belongs to the class V-like SAM-binding methyltransferase superfamily. Interacts with HDAC1, HDAC2, HDAC3, CBX1 and EP300.

The protein resides in the nucleus. The catalysed reaction is L-lysyl(20)-[histone H4] + S-adenosyl-L-methionine = N(6)-methyl-L-lysyl(20)-[histone H4] + S-adenosyl-L-homocysteine + H(+). Putative histone methyltransferase that acts as a transcriptional repressor of smooth muscle gene expression. Promotes the transition from differentiated to proliferative smooth muscle by suppressing differentiation and maintaining the proliferative potential of vascular smooth muscle cells. Also plays a role in endothelial cells by inhibiting endothelial cell proliferation, survival and differentiation. It is unclear whether it has histone methyltransferase activity in vivo. According to some authors, it does not act as a histone methyltransferase by itself and represses transcription by recruiting EHMT2/G9a. According to others, it possesses histone methyltransferase activity when associated with other proteins and specifically methylates 'Lys-20' of histone H4 in vitro. 'Lys-20' methylation represents a specific tag for epigenetic transcriptional repression. The chain is Putative histone-lysine N-methyltransferase PRDM6 (PRDM6) from Bos taurus (Bovine).